Reading from the N-terminus, the 921-residue chain is Translation initiation factor IF-2 (921 aa).

The tract at residues 1–296 is disordered; sequence MADNNTPGDK…PGPQKQRGRL (296 aa). Over residues 80-89 the composition is skewed to low complexity; that stretch reads RPSGPRPGSS. Positions 116–182 are enriched in basic and acidic residues; that stretch reads ARVRDMEERR…AKKRFGEGEA (67 aa). The span at 183–257 shows a compositional bias: low complexity; sequence PRPATAAPQQ…LGRAPGVAAG (75 aa). In terms of domain architecture, tr-type G spans 417-586; the sequence is PRSPVVTVMG…MIALQADILD (170 aa). The segment at 426 to 433 is G1; sequence GHVDHGKT. A GTP-binding site is contributed by 426-433; it reads GHVDHGKT. The G2 stretch occupies residues 451–455; sequence GITQH. Residues 474–477 form a G3 region; sequence DTPG. Residues 474–478 and 528–531 contribute to the GTP site; these read DTPGH and NKID. Positions 528-531 are G4; the sequence is NKID. The G5 stretch occupies residues 564–566; sequence SAK.

This sequence belongs to the TRAFAC class translation factor GTPase superfamily. Classic translation factor GTPase family. IF-2 subfamily.

Its subcellular location is the cytoplasm. Functionally, one of the essential components for the initiation of protein synthesis. Protects formylmethionyl-tRNA from spontaneous hydrolysis and promotes its binding to the 30S ribosomal subunits. Also involved in the hydrolysis of GTP during the formation of the 70S ribosomal complex. This Bradyrhizobium sp. (strain BTAi1 / ATCC BAA-1182) protein is Translation initiation factor IF-2.